The sequence spans 100 residues: Nucleoid-associated protein MYPU_0500 (100 aa).

It belongs to the YbaB/EbfC family. As to quaternary structure, homodimer.

The protein resides in the cytoplasm. The protein localises to the nucleoid. Functionally, binds to DNA and alters its conformation. May be involved in regulation of gene expression, nucleoid organization and DNA protection. In Mycoplasmopsis pulmonis (strain UAB CTIP) (Mycoplasma pulmonis), this protein is Nucleoid-associated protein MYPU_0500.